Here is a 482-residue protein sequence, read N- to C-terminus: Probable cytosol aminopeptidase (482 aa).

Lys-251 and Asp-256 together coordinate Mn(2+). Lys-263 is an active-site residue. The Mn(2+) site is built by Asp-274, Asp-333, and Glu-335. Arg-337 is an active-site residue.

This sequence belongs to the peptidase M17 family. Requires Mn(2+) as cofactor.

Its subcellular location is the cytoplasm. It carries out the reaction Release of an N-terminal amino acid, Xaa-|-Yaa-, in which Xaa is preferably Leu, but may be other amino acids including Pro although not Arg or Lys, and Yaa may be Pro. Amino acid amides and methyl esters are also readily hydrolyzed, but rates on arylamides are exceedingly low.. It catalyses the reaction Release of an N-terminal amino acid, preferentially leucine, but not glutamic or aspartic acids.. In terms of biological role, presumably involved in the processing and regular turnover of intracellular proteins. Catalyzes the removal of unsubstituted N-terminal amino acids from various peptides. The chain is Probable cytosol aminopeptidase from Acinetobacter baumannii (strain AB307-0294).